Consider the following 72-residue polypeptide: SRY-related protein AES1 (72 aa).

Residues 1–69 constitute a DNA-binding region (HMG box); it reads VKRPMNAFMV…KHMADYPDYK (69 aa).

It localises to the nucleus. In Alligator mississippiensis (American alligator), this protein is SRY-related protein AES1.